Here is a 122-residue protein sequence, read N- to C-terminus: Small ribosomal subunit protein bS16 (122 aa).

Positions 81 to 122 (GLMKRDAKNNPKKGEPGEKAKERAKERAEKAAAGSTEDAAAE) are disordered. A compositionally biased stretch (basic and acidic residues) spans 83-110 (MKRDAKNNPKKGEPGEKAKERAKERAEK). Low complexity predominate over residues 111-122 (AAAGSTEDAAAE).

It belongs to the bacterial ribosomal protein bS16 family.

This is Small ribosomal subunit protein bS16 from Xanthobacter autotrophicus (strain ATCC BAA-1158 / Py2).